The primary structure comprises 378 residues: Cytochrome b (378 aa).

Helical transmembrane passes span 34–54 (FGSL…FLAM), 78–99 (WLLR…YLHV), 114–134 (WLIG…GYVL), and 179–199 (FFTF…IHLL). Heme b is bound by residues H84 and H98. Residues H183 and H197 each coordinate heme b. H202 is an a ubiquinone binding site. A run of 4 helical transmembrane segments spans residues 227 to 247 (FKDI…VLIS), 289 to 309 (LGGV…PFYN), 321 to 341 (INQV…WIGA), and 348 to 368 (YVLI…VNPL).

The protein belongs to the cytochrome b family. The main subunits of complex b-c1 are: cytochrome b, cytochrome c1 and the Rieske protein. Requires heme b as cofactor.

The protein localises to the mitochondrion inner membrane. Component of the ubiquinol-cytochrome c reductase complex (complex III or cytochrome b-c1 complex) that is part of the mitochondrial respiratory chain. The b-c1 complex mediates electron transfer from ubiquinol to cytochrome c. Contributes to the generation of a proton gradient across the mitochondrial membrane that is then used for ATP synthesis. This Drosophila sechellia (Fruit fly) protein is Cytochrome b (mt:Cyt-b).